Consider the following 399-residue polypeptide: Chromosomal replication initiator protein DnaA (399 aa).

Positions 1 to 64 (MELNALIKKI…EEEVRKLIEV (64 aa)) are domain I, interacts with DnaA modulators. The interval 64 to 77 (VKEKEEKKKVEIKD) is domain II. Residues 78-290 (FLNPKYTLEN…GKIKLIKLKG (213 aa)) form a domain III, AAA+ region region. Positions 89, 94, 122, 123, 124, 125, 126, and 127 each coordinate ADP. Ile-89 contacts ATP. Gly-122 provides a ligand contact to ATP. Positions 124, 125, 126, and 127 each coordinate ATP. Residue Thr-126 coordinates Mg(2+). Val-156 serves as a coordination point for ssDNA. ATP is bound at residue Asp-180. Asp-181 contributes to the Mg(2+) binding site. Residues Lys-188, Arg-190, and Thr-191 each coordinate ssDNA. Arg-277 is an ATP binding site. Residues 291 to 399 (FEGLERKERK…LEKQAFDKIC (109 aa)) are domain IV, binds dsDNA.

This sequence belongs to the DnaA family. In the presence of ATP analog AMP-PCP forms a linear, right-handed spiral filament with 4 subunits arranged head-to-tail, about 122 Angstroms wide and about 360 Angstroms long. Mg(2+)-AMP-PCP binds at the subunit interface with the gamma phosphate coordinated by adjacent subunits. dsDNA probably wraps on the outside of the filament. ssDNA binds to the center of the helical filament via the AAA+ domain, which stretches the DNA.

It localises to the cytoplasm. Functionally, plays an essential role in the initiation and regulation of chromosomal replication. ATP-DnaA binds to the origin of replication (oriC) to initiate formation of the DNA replication initiation complex once per cell cycle. Binds the DnaA box (a 9 base pair repeat at the origin) and separates the double-stranded (ds)DNA. Forms a right-handed helical filament on oriC DNA; dsDNA binds to the exterior of the filament while single-stranded (ss)DNA is stabiized in the filament's interior. The ATP-DnaA-oriC complex binds and stabilizes one strand of the AT-rich DNA unwinding element (DUE), permitting loading of DNA polymerase. After initiation quickly degrades to an ADP-DnaA complex that is not apt for DNA replication. Binds acidic phospholipids. Its function is as follows. Able to melt short unstable dsDNA (15-mer with melting temperature, TM, 43 degrees Celsius) in the presence of a non-hydrolyzable ATP analog; a more stable dsDNA (20-mer, TM 55 degrees Celsius) is poor substrate. ADP does not support dsDNA melting. Addition of DnaA-AMP-PCP (an ATP analog, beta,gamma-methyleneadenosine 5'-triphosphate) to an oric-containing plasmid causes a DNA shift to more positively supercoiled topological species, stabilizing a positive wrap and right-handed filament as seen in the crystal structure without DNA. Filament formation generated by positive supercoiling may destabilize the origin unwinding element through compensatory negative supercoiling strain. This is Chromosomal replication initiator protein DnaA from Aquifex aeolicus (strain VF5).